The sequence spans 95 residues: Bacterial microcompartment shell protein EutM (95 aa).

Residues 6–90 form the BMC domain; that stretch reads ALGMIETKGL…PHFEVDAILP (85 aa).

The protein belongs to the bacterial microcompartments protein family. In terms of assembly, homohexamer; has a positively charged pore 9 Angstroms in diameter. The hexamers pack into a two-dimensional array. May interact with EutQ.

It is found in the bacterial microcompartment. Its pathway is amine and polyamine degradation; ethanolamine degradation. Functionally, a component of the bacterial microcompartment (BMC) shell dedicated to ethanolamine degradation. Each homohexamer has a central pore with an opening of up to 9.0 Angstroms. Expression of the eut operon may allow this bacteria to use ethanolamine as a carbon, nitrogen and energy source. The pore probably allows metabolite passage into and out of the BMC. This Clostridioides difficile (strain 630) (Peptoclostridium difficile) protein is Bacterial microcompartment shell protein EutM.